We begin with the raw amino-acid sequence, 446 residues long: Gamma-glutamyl phosphate reductase (446 aa).

Belongs to the gamma-glutamyl phosphate reductase family.

The protein resides in the cytoplasm. The catalysed reaction is L-glutamate 5-semialdehyde + phosphate + NADP(+) = L-glutamyl 5-phosphate + NADPH + H(+). It participates in amino-acid biosynthesis; L-proline biosynthesis; L-glutamate 5-semialdehyde from L-glutamate: step 2/2. In terms of biological role, catalyzes the NADPH-dependent reduction of L-glutamate 5-phosphate into L-glutamate 5-semialdehyde and phosphate. The product spontaneously undergoes cyclization to form 1-pyrroline-5-carboxylate. This is Gamma-glutamyl phosphate reductase from Sulfurihydrogenibium sp. (strain YO3AOP1).